Here is a 355-residue protein sequence, read N- to C-terminus: Chemerin-like receptor 2 (355 aa).

At 1 to 41 the chain is on the extracellular side; that stretch reads MEDLEETLFEEFENYSYALDYYSLESDLEEKVQLGVVHWVS. A glycan (N-linked (GlcNAc...) asparagine) is linked at Asn14. The chain crosses the membrane as a helical span at residues 42–62; sequence LVLYCLSFVLGIPGNAIVIWF. At 63 to 73 the chain is on the cytoplasmic side; the sequence is TGFKWKRTVST. A helical membrane pass occupies residues 74–94; the sequence is LWFLNLAIADFIFLLFLPLYI. At 95–112 the chain is on the extracellular side; the sequence is SYVVMNFHWPFGIWLCKA. A disulfide bond links Cys110 and Cys187. A helical transmembrane segment spans residues 113–133; it reads NSFTAQLNMFASVFFLTVISL. The Cytoplasmic segment spans residues 134 to 154; it reads DHYIHLIHPVLSHRHRTLKNS. Residues 155-175 traverse the membrane as a helical segment; the sequence is LIVIIFIWLLASLIGGPALYF. Residues 176–210 lie on the Extracellular side of the membrane; it reads RDTVEFNNHTLCYNNFQKHDPDLTVIRHHVLTWVK. A helical transmembrane segment spans residues 211 to 231; it reads YIVGYLFPLLTMSICYLCLIL. At 232–247 the chain is on the cytoplasmic side; that stretch reads KVKKRSILISSRHFWT. The helical transmembrane segment at 248 to 268 threads the bilayer; it reads ILAVVVAFVVCWTPYHLFSIW. Residues 269–286 are Extracellular-facing; it reads ELTIHHNSYSHHVMQAGI. Residues 287–307 traverse the membrane as a helical segment; sequence PLSTGLAFLNSCLNPILYVLI. The Cytoplasmic segment spans residues 308–355; that stretch reads SKKFQARFRSSVAEILKYTLWEVSCSGTVSEQLRNSETKNLCLLETAQ.

Belongs to the chemokine-like receptor (CMKLR) family.

The protein resides in the cell membrane. Functionally, receptor for chemoattractant adipokine chemerin/RARRES2 suggesting a role for this receptor in the regulation of inflammation and energy homesotasis. Signals mainly via beta-arrestin pathway. Binding of RARRES2 activates weakly G proteins, calcium mobilization and MAPK1/MAPK3 (ERK1/2) phosphorylation too. Acts also as a receptor for TAFA1, mediates its effects on neuronal stem-cell proliferation and differentiation via the activation of ROCK/ERK and ROCK/STAT3 signaling pathway. In Macaca fascicularis (Crab-eating macaque), this protein is Chemerin-like receptor 2 (CMKLR2).